The chain runs to 453 residues: Na(+)/H(+) antiporter NhaA 2 (453 aa).

The next 11 membrane-spanning stretches (helical) occupy residues 32 to 52, 71 to 91, 109 to 129, 140 to 160, 169 to 189, 193 to 213, 232 to 252, 284 to 304, 310 to 330, 356 to 376, and 382 to 402; these read GALL…PGAA, LSLA…VAGL, AVPI…YVLI, GWAI…AVIG, VFLL…IAVF, NLSV…AILL, ALVH…ALVV, AVPV…GGLV, PVAI…VIAV, MLAG…FAAG, and HVKI…AVIL. Positions 409-453 are disordered; the sequence is GSRGNDATTRDPDQTRVGTATQRTTPDHPTPAATDANQPARSPAP.

This sequence belongs to the NhaA Na(+)/H(+) (TC 2.A.33) antiporter family.

The protein resides in the cell membrane. The enzyme catalyses Na(+)(in) + 2 H(+)(out) = Na(+)(out) + 2 H(+)(in). Na(+)/H(+) antiporter that extrudes sodium in exchange for external protons. The protein is Na(+)/H(+) antiporter NhaA 2 of Salinispora tropica (strain ATCC BAA-916 / DSM 44818 / JCM 13857 / NBRC 105044 / CNB-440).